A 580-amino-acid polypeptide reads, in one-letter code: Formate--tetrahydrofolate ligase (580 aa).

65–72 (TPHGEGKT) lines the ATP pocket.

Belongs to the formate--tetrahydrofolate ligase family.

The enzyme catalyses (6S)-5,6,7,8-tetrahydrofolate + formate + ATP = (6R)-10-formyltetrahydrofolate + ADP + phosphate. It participates in one-carbon metabolism; tetrahydrofolate interconversion. This Shewanella baltica (strain OS223) protein is Formate--tetrahydrofolate ligase.